The chain runs to 120 residues: Large ribosomal subunit protein bL19 (120 aa).

This sequence belongs to the bacterial ribosomal protein bL19 family.

Its function is as follows. This protein is located at the 30S-50S ribosomal subunit interface and may play a role in the structure and function of the aminoacyl-tRNA binding site. The chain is Large ribosomal subunit protein bL19 from Dichelobacter nodosus (strain VCS1703A).